The chain runs to 700 residues: Methionine--tRNA ligase (700 aa).

A 'HIGH' region motif is present at residues 16 to 26; that stretch reads PYANGAFHVGH. Positions 148, 151, 161, and 164 each coordinate Zn(2+). The 'KMSKS' region signature appears at 337–341; that stretch reads KMSKS. Lys-340 contributes to the ATP binding site. Residues 594-700 form the tRNA-binding domain; it reads DFAKIDLRIA…PGAEPGMRVG (107 aa).

This sequence belongs to the class-I aminoacyl-tRNA synthetase family. MetG type 1 subfamily. Homodimer. It depends on Zn(2+) as a cofactor.

It is found in the cytoplasm. It carries out the reaction tRNA(Met) + L-methionine + ATP = L-methionyl-tRNA(Met) + AMP + diphosphate. Its function is as follows. Is required not only for elongation of protein synthesis but also for the initiation of all mRNA translation through initiator tRNA(fMet) aminoacylation. This chain is Methionine--tRNA ligase, found in Janthinobacterium sp. (strain Marseille) (Minibacterium massiliensis).